Here is a 178-residue protein sequence, read N- to C-terminus: MTAPQEPVDPIQDAGVEAPDLQAEIDALRAELAAAQAQAQAHQEQALRAMAEAENVRRRAQEDVSKARKFGIESFAESLVPVKDSLEAALAQPEQTAQALREGVEVTLKQLNGAFERNMLKDIAPAQGDKFDPHLHQAISSVPAPQPANTVVQLLQKGYVIADRTLRPALVVVSAGQG.

Belongs to the GrpE family. As to quaternary structure, homodimer.

The protein localises to the cytoplasm. In terms of biological role, participates actively in the response to hyperosmotic and heat shock by preventing the aggregation of stress-denatured proteins, in association with DnaK and GrpE. It is the nucleotide exchange factor for DnaK and may function as a thermosensor. Unfolded proteins bind initially to DnaJ; upon interaction with the DnaJ-bound protein, DnaK hydrolyzes its bound ATP, resulting in the formation of a stable complex. GrpE releases ADP from DnaK; ATP binding to DnaK triggers the release of the substrate protein, thus completing the reaction cycle. Several rounds of ATP-dependent interactions between DnaJ, DnaK and GrpE are required for fully efficient folding. The polypeptide is Protein GrpE (Bordetella avium (strain 197N)).